We begin with the raw amino-acid sequence, 621 residues long: tRNA 5-methylaminomethyl-2-thiouridine biosynthesis bifunctional protein MnmC (621 aa).

The segment at 1–222 (MKNANLSFKG…KRQMSSAVLE (222 aa)) is tRNA (mnm(5)s(2)U34)-methyltransferase. Residues 250–621 (IGTGVAGLAT…LIRKLKKGLK (372 aa)) form an FAD-dependent cmnm(5)s(2)U34 oxidoreductase region.

In the N-terminal section; belongs to the methyltransferase superfamily. tRNA (mnm(5)s(2)U34)-methyltransferase family. It in the C-terminal section; belongs to the DAO family. Requires FAD as cofactor.

Its subcellular location is the cytoplasm. The enzyme catalyses 5-aminomethyl-2-thiouridine(34) in tRNA + S-adenosyl-L-methionine = 5-methylaminomethyl-2-thiouridine(34) in tRNA + S-adenosyl-L-homocysteine + H(+). In terms of biological role, catalyzes the last two steps in the biosynthesis of 5-methylaminomethyl-2-thiouridine (mnm(5)s(2)U) at the wobble position (U34) in tRNA. Catalyzes the FAD-dependent demodification of cmnm(5)s(2)U34 to nm(5)s(2)U34, followed by the transfer of a methyl group from S-adenosyl-L-methionine to nm(5)s(2)U34, to form mnm(5)s(2)U34. This chain is tRNA 5-methylaminomethyl-2-thiouridine biosynthesis bifunctional protein MnmC, found in Campylobacter concisus (strain 13826).